The primary structure comprises 555 residues: E3 ubiquitin-protein ligase NEURL1B (555 aa).

The NHR 1 domain maps to 38 to 194; the sequence is APRFHAQAKG…ITDEVQLLES (157 aa). T199 is modified (phosphothreonine). The NHR 2 domain occupies 279 to 433; it reads DLRFHATRGP…GVAGQLRLLG (155 aa). Positions 436-493 are disordered; that stretch reads QSSPATTTPSGSLSGSQDDSDSDMTFSVNQSSSASESSLVTAPSSPLSPPVSPVFSPP. Residues 462–480 show a composition bias toward low complexity; the sequence is SVNQSSSASESSLVTAPSS. A compositionally biased stretch (pro residues) spans 481-493; the sequence is PLSPPVSPVFSPP. An RING-type zinc finger spans residues 503 to 543; sequence CTVCFDGEVDTVIYTCGHMCLCHSCGLRLKRQARACCPICR.

In terms of assembly, interacts with JAG1, DLL1 and DLL4. As to expression, highest expression in brain, prostate and small intestine. In the brain the levels are higher in fetal than in adult stage. In the adult brain the highest levels are detected in the olfactory system, cerebellar cortex, optic nerve and the frontal lobe.

The protein localises to the cytoplasm. It carries out the reaction S-ubiquitinyl-[E2 ubiquitin-conjugating enzyme]-L-cysteine + [acceptor protein]-L-lysine = [E2 ubiquitin-conjugating enzyme]-L-cysteine + N(6)-ubiquitinyl-[acceptor protein]-L-lysine.. It participates in protein modification; protein ubiquitination. Functionally, E3 ubiquitin-protein ligase involved in regulation of the Notch pathway through influencing the stability and activity of several Notch ligands. The polypeptide is E3 ubiquitin-protein ligase NEURL1B (NEURL1B) (Homo sapiens (Human)).